We begin with the raw amino-acid sequence, 197 residues long: Ribonuclease HII (197 aa).

Residues 11–197 enclose the RNase H type-2 domain; that stretch reads HLIAGVDEVG…FAPVKKILGL (187 aa). The a divalent metal cation site is built by D17, E18, and D109.

This sequence belongs to the RNase HII family. The cofactor is Mn(2+). Mg(2+) serves as cofactor.

It is found in the cytoplasm. It catalyses the reaction Endonucleolytic cleavage to 5'-phosphomonoester.. In terms of biological role, endonuclease that specifically degrades the RNA of RNA-DNA hybrids. The sequence is that of Ribonuclease HII from Actinobacillus pleuropneumoniae serotype 5b (strain L20).